We begin with the raw amino-acid sequence, 386 residues long: Sphingosine 1-phosphate receptor 4 (386 aa).

Topologically, residues 1-56 (MNISTWSTLVTPESCHRLAASGHSLLIVLHYNHSGRLASRGGSEDGGGLGMLRGPS) are extracellular. 2 N-linked (GlcNAc...) asparagine glycosylation sites follow: Asn2 and Asn32. The chain crosses the membrane as a helical span at residues 57-77 (VAAGCLVVLENAMVLAAIAIY). Over 78-87 (MRSRRWVYYC) the chain is Cytoplasmic. A helical membrane pass occupies residues 88–108 (LLNITLSDLLTGLAYVVNVLL). Residues 109 to 120 (SGTRTFQLSPVH) lie on the Extracellular side of the membrane. A helical membrane pass occupies residues 121–141 (WFLREGLLFMALAASTFSLLF). Residues 142 to 163 (TAGERFATMVRVAESGATKTSR) lie on the Cytoplasmic side of the membrane. The chain crosses the membrane as a helical span at residues 164-184 (VYGCIGLCWLLAAILGLLPLL). Over 185-208 (GWNCVCAFPRCSSLLPLYSKGYVL) the chain is Extracellular. A helical membrane pass occupies residues 209–229 (FCVVVFALILVAILSLYGAIF). The Cytoplasmic segment spans residues 230 to 254 (RVVRANGQKSPRPPARRKSRRLLNT). The chain crosses the membrane as a helical span at residues 255 to 275 (VLMILVAFVVCWGPLFGLLLA). The Extracellular portion of the chain corresponds to 276 to 290 (DIFGSNVWAQEYLRG). A helical membrane pass occupies residues 291–311 (MDWILALAVFNSAINPLIYSF). Topologically, residues 312–386 (RSREVQRAVL…LSSISSVRST (75 aa)) are cytoplasmic. The S-palmitoyl cysteine moiety is linked to residue Cys325.

This sequence belongs to the G-protein coupled receptor 1 family. In terms of tissue distribution, specifically expressed in fetal and adult lymphoid and hematopoietic tissue. Expressed in lung, spleen, thymus and lymph node but absent in other non-lymphatic tissue. Coexpressed with GNA15 at the same relative levels in all tissues examined, with the highest levels in adult spleen and lung.

The protein resides in the cell membrane. Receptor for the lysosphingolipid sphingosine 1-phosphate (S1P). S1P is a bioactive lysophospholipid that elicits diverse physiological effect on most types of cells and tissues. May be involved in cell migration processes that are specific for lymphocytes. In Mus musculus (Mouse), this protein is Sphingosine 1-phosphate receptor 4 (S1pr4).